The primary structure comprises 339 residues: DNA-directed RNA polymerase subunit alpha (339 aa).

Positions 1–235 (MVIQKNWQEL…DQLQVFVNFE (235 aa)) are alpha N-terminal domain (alpha-NTD). An alpha C-terminal domain (alpha-CTD) region spans residues 251–339 (FNPALLKKVD…DLAKRFEEHY (89 aa)).

Belongs to the RNA polymerase alpha chain family. As to quaternary structure, homodimer. The RNAP catalytic core consists of 2 alpha, 1 beta, 1 beta' and 1 omega subunit. When a sigma factor is associated with the core the holoenzyme is formed, which can initiate transcription.

The catalysed reaction is RNA(n) + a ribonucleoside 5'-triphosphate = RNA(n+1) + diphosphate. Functionally, DNA-dependent RNA polymerase catalyzes the transcription of DNA into RNA using the four ribonucleoside triphosphates as substrates. This is DNA-directed RNA polymerase subunit alpha from Methylorubrum extorquens (strain CM4 / NCIMB 13688) (Methylobacterium extorquens).